The chain runs to 836 residues: Pentatricopeptide repeat-containing protein At1g79490, mitochondrial (836 aa).

The N-terminal 85 residues, 1–85, are a transit peptide targeting the mitochondrion; it reads MIRGRTAKVI…QCRSIVRRFC (85 aa). PPR repeat units follow at residues 204-238, 242-276, 277-311, 312-346, 347-381, 382-416, 417-451, 452-486, 487-521, 528-555, 556-590, and 591-625; these read SDEC…SSSH, SFNA…GCKI, DTQT…DSLL, DGST…KLRP, SFSV…GHRP, SATM…GFRP, NFGL…GFLP, TPST…GLRP, GLSS…GYSV, VLMI…GIKT, NNFI…AGKV, and DLVL…KHKA. The 77-residue stretch at 710–786 folds into the Smr domain; it reads LDVRNLSVGA…APGELVMEWF (77 aa).

Belongs to the PPR family. P subfamily.

The protein localises to the mitochondrion. This Arabidopsis thaliana (Mouse-ear cress) protein is Pentatricopeptide repeat-containing protein At1g79490, mitochondrial (EMB2217).